A 598-amino-acid polypeptide reads, in one-letter code: Transcription factor himD (598 aa).

Positions 18-47 (CQNCARAKIRCIRSVPTGSCDRCERLRKTC) form a DNA-binding region, zn(2)-C6 fungal-type. The disordered stretch occupies residues 87-110 (TVSEASIDDKSPTTTPTTPRPPPD).

The protein resides in the nucleus. In terms of biological role, transcription factor that, with himB, probably co-regulates the him gene cluster that mediates the biosynthesis of himeic acid A, a ubiquitin-activating enzyme (E1) inhibitor. This chain is Transcription factor himD, found in Aspergillus japonicus.